Consider the following 77-residue polypeptide: Large ribosomal subunit protein bL28 (77 aa).

It belongs to the bacterial ribosomal protein bL28 family.

This chain is Large ribosomal subunit protein bL28, found in Delftia acidovorans (strain DSM 14801 / SPH-1).